Here is a 164-residue protein sequence, read N- to C-terminus: Phosphopantetheine adenylyltransferase (164 aa).

Serine 10 contributes to the substrate binding site. ATP-binding positions include 10–11 and histidine 18; that span reads SF. Substrate contacts are provided by lysine 42, methionine 74, and arginine 88. ATP-binding positions include 89 to 91, glutamate 99, and 124 to 130; these read GLR and YFFVSAR.

The protein belongs to the bacterial CoaD family. Homohexamer. The cofactor is Mg(2+).

The protein resides in the cytoplasm. The catalysed reaction is (R)-4'-phosphopantetheine + ATP + H(+) = 3'-dephospho-CoA + diphosphate. Its pathway is cofactor biosynthesis; coenzyme A biosynthesis; CoA from (R)-pantothenate: step 4/5. Reversibly transfers an adenylyl group from ATP to 4'-phosphopantetheine, yielding dephospho-CoA (dPCoA) and pyrophosphate. This chain is Phosphopantetheine adenylyltransferase, found in Anaeromyxobacter dehalogenans (strain 2CP-1 / ATCC BAA-258).